A 510-amino-acid chain; its full sequence is Bifunctional purine biosynthesis protein PurH (510 aa).

Residues 1–145 (MSKRALISVS…KNFEDVLVVT (145 aa)) enclose the MGS-like domain.

This sequence belongs to the PurH family.

The enzyme catalyses (6R)-10-formyltetrahydrofolate + 5-amino-1-(5-phospho-beta-D-ribosyl)imidazole-4-carboxamide = 5-formamido-1-(5-phospho-D-ribosyl)imidazole-4-carboxamide + (6S)-5,6,7,8-tetrahydrofolate. It carries out the reaction IMP + H2O = 5-formamido-1-(5-phospho-D-ribosyl)imidazole-4-carboxamide. The protein operates within purine metabolism; IMP biosynthesis via de novo pathway; 5-formamido-1-(5-phospho-D-ribosyl)imidazole-4-carboxamide from 5-amino-1-(5-phospho-D-ribosyl)imidazole-4-carboxamide (10-formyl THF route): step 1/1. It participates in purine metabolism; IMP biosynthesis via de novo pathway; IMP from 5-formamido-1-(5-phospho-D-ribosyl)imidazole-4-carboxamide: step 1/1. The chain is Bifunctional purine biosynthesis protein PurH from Oceanobacillus iheyensis (strain DSM 14371 / CIP 107618 / JCM 11309 / KCTC 3954 / HTE831).